The following is a 210-amino-acid chain: tRNA (guanine-N(7)-)-methyltransferase (210 aa).

Residues E43, E68, D95, and D117 each contribute to the S-adenosyl-L-methionine site. D117 is a catalytic residue. Substrate contacts are provided by residues K121, D153, and 190 to 193 (TEYE).

Belongs to the class I-like SAM-binding methyltransferase superfamily. TrmB family.

It catalyses the reaction guanosine(46) in tRNA + S-adenosyl-L-methionine = N(7)-methylguanosine(46) in tRNA + S-adenosyl-L-homocysteine. Its pathway is tRNA modification; N(7)-methylguanine-tRNA biosynthesis. Catalyzes the formation of N(7)-methylguanine at position 46 (m7G46) in tRNA. This is tRNA (guanine-N(7)-)-methyltransferase from Macrococcus caseolyticus (strain JCSC5402) (Macrococcoides caseolyticum).